The sequence spans 200 residues: Recombination protein RecR (200 aa).

A C4-type zinc finger spans residues 58-75 (CPLCFTLKESKEADCHFC). Residues 82 to 177 (QSLCIVASPK…NISRLALGLP (96 aa)) enclose the Toprim domain.

It belongs to the RecR family.

May play a role in DNA repair. It seems to be involved in an RecBC-independent recombinational process of DNA repair. It may act with RecF and RecO. This is Recombination protein RecR from Chlamydia pneumoniae (Chlamydophila pneumoniae).